The primary structure comprises 129 residues: Snaclec rhodocetin subunit beta (129 aa).

The 123-residue stretch at Arg-3–Phe-125 folds into the C-type lectin domain. Cystine bridges form between Cys-4/Cys-15, Cys-32/Cys-123, and Cys-98/Cys-115.

In terms of assembly, heterotetramer of subunit alpha, beta, gamma and delta; only the gamma and the delta subunits are disulfide-linked. Alpha-beta heterodimer and gamma-delta heterodimer associate orthogonally, giving a cruciform conformation. This heterotetramer may covalently dimerizes thanks to the gamma subunit. In terms of tissue distribution, expressed by the venom gland.

The protein localises to the secreted. Functionally, potent inhibitor of collagen-induced platelet aggregation. It acts by binding to the integrin alpha2A domain and blocks collagen binding to integrin alpha-2/beta-1 (ITGA2/ITGB1). The gamma/delta subunits mainly contribute to this activity. This chain is Snaclec rhodocetin subunit beta, found in Calloselasma rhodostoma (Malayan pit viper).